Consider the following 409-residue polypeptide: Peptidase T (409 aa).

H78 provides a ligand contact to Zn(2+). The active site involves D80. D140 serves as a coordination point for Zn(2+). The active-site Proton acceptor is E173. E174, D196, and H379 together coordinate Zn(2+).

This sequence belongs to the peptidase M20B family. Requires Zn(2+) as cofactor.

The protein resides in the cytoplasm. The catalysed reaction is Release of the N-terminal residue from a tripeptide.. Functionally, cleaves the N-terminal amino acid of tripeptides. The chain is Peptidase T from Salmonella heidelberg (strain SL476).